The primary structure comprises 417 residues: Sterile alpha motif domain-containing protein 14 (417 aa).

A disordered region spans residues 36 to 302 (QLLAKGRRHR…GGPRQETKCS (267 aa)). The span at 40-49 (KGRRHRPSRS) shows a compositional bias: basic residues. Serine 84 and serine 108 each carry phosphoserine. Residues 138-153 (SGSPPRSAPSSDSSPS) show a composition bias toward low complexity. Positions 159-173 (PRAEPHSEDDSRDAS) are enriched in basic and acidic residues. Phosphoserine is present on residues serine 173 and serine 179. 2 stretches are compositionally biased toward low complexity: residues 244–260 (SGKG…PTCS) and 276–289 (STLS…SSSP). Serine 279 carries the phosphoserine modification. Threonine 283 carries the phosphothreonine modification. One can recognise an SAM domain in the interval 326 to 389 (WTSQQVGQWL…KRKLKELAAA (64 aa)). Residues 375-416 (DRALVKRKLKELAAAAEKERKAQEKTAKQREKLRRRENDAKK) are a coiled coil. The interval 390–417 (AEKERKAQEKTAKQREKLRRRENDAKKS) is disordered.

This chain is Sterile alpha motif domain-containing protein 14 (Samd14), found in Mus musculus (Mouse).